A 375-amino-acid polypeptide reads, in one-letter code: Proclotting enzyme (375 aa).

Residues 1-21 form the signal peptide; that stretch reads MLVNNVFSLLCFPLLMSVVRC. Positions 22–27 are excised as a propeptide; that stretch reads STLSRQ. Gln30 carries the post-translational modification Pyrrolidone carboxylic acid. A Clip domain is found at 39 to 84; the sequence is LCSNRFTEEGTCKNVLDCRILLQKNDYNLLKESICGFEGITPKVCC. 3 cysteine pairs are disulfide-bonded: Cys40/Cys83, Cys50/Cys73, and Cys56/Cys84. A disordered region spans residues 90 to 113; that stretch reads VISSTQAPPETTTTERPPKQIPPN. Intrachain disulfides connect Cys118/Cys248, Cys157/Cys173, Cys295/Cys311, and Cys322/Cys351. The N-linked (GlcNAc...) asparagine glycan is linked to Asn122. Positions 128 to 375 constitute a Peptidase S1 domain; it reads IIGGREAPIG…FLDWIAEHMV (248 aa). His172 serves as the catalytic Charge relay system. The Ca(2+) site is built by Glu194, Asn196, Ser199, and Asp202. Residue Asp228 is the Charge relay system of the active site. Residues Asn235 and Asn304 are each glycosylated (N-linked (GlcNAc...) asparagine). Ser326 functions as the Charge relay system in the catalytic mechanism.

It belongs to the peptidase S1 family. CLIP subfamily. As to quaternary structure, in the active form, heterodimer of a light chain and a heavy chain; disulfide-linked. Forms a covalent heterodimer with intracellular coagulation inhibitor 2/LICI-2. Post-translationally, proteolytically cleaved into its mature active form by serine protease factor B. Cleavage produces a 25 kDa light chain containing the CLIP domain and a catalytic 31 kDa heavy chain which remain covalently associated through an interchain disulfide bond. Proteolytically cleaved by clotting factor G subunit beta. Contains six O-linked carbohydrate chains in the N-terminal light chain. Expressed in hemocytes (at protein level).

The protein resides in the cytoplasmic vesicle. Its subcellular location is the secretory vesicle. The protein localises to the secreted. The catalysed reaction is Selective cleavage of 18-Arg-|- and 47-Arg-|- bonds in coagulogen to form coagulin and fragments.. Its activity is regulated as follows. Inhibited by intracellular coagulation inhibitor 2/LICI-2 and to a lesser extent by intracellular coagulation inhibitor 3/LICI-3. Its function is as follows. This enzyme is closely associated with an endotoxin-sensitive hemolymph coagulation system in limulus. Its active form catalyzes the conversion of coagulogen to insoluble coagulin gel. The sequence is that of Proclotting enzyme from Tachypleus tridentatus (Japanese horseshoe crab).